The primary structure comprises 429 residues: MANTDAFFSRPLAETDPDIFGAIEKELGRQRHEIELIASENIVSRAVLEAQGSIMTNKYAEGYPGKRYYGGCQFVDIAEELAIERAKKLFGVNFANVQPNSGSQMNQAVFLALLQPGDTFMGLDLNSGGHLTHGSPVNMSGKWFNVVSYGVRQDDNLLDMDAVAESARKHKPKLIIAGGTAYSRIWDWKRFREIADEVGAYLMVDMAHIAGLVAGNQHPSPFPHCHVATTTTHKSLRGPRGGMILTNDEDLAKKFNSAVFPGLQGGPLMHVIAAKAVAFGEALQPEFQDYAAQVVKNAKALSETLVKGGLDIVSGGTDNHLMLVDLRKKNATGKRAEAALGRAYVTCNKNGIPFDPEKPFVTSGVRLGTPAGTTRGFKEAEFIEIGNLIVEVLDGLKVANSDEGNSAVEASVRDKVIGLTGRFPMYPYL.

Residues L125 and G129–L131 each bind (6S)-5,6,7,8-tetrahydrofolate. K234 carries the N6-(pyridoxal phosphate)lysine modification.

This sequence belongs to the SHMT family. As to quaternary structure, homodimer. Pyridoxal 5'-phosphate is required as a cofactor.

It is found in the cytoplasm. It carries out the reaction (6R)-5,10-methylene-5,6,7,8-tetrahydrofolate + glycine + H2O = (6S)-5,6,7,8-tetrahydrofolate + L-serine. The protein operates within one-carbon metabolism; tetrahydrofolate interconversion. It functions in the pathway amino-acid biosynthesis; glycine biosynthesis; glycine from L-serine: step 1/1. Functionally, catalyzes the reversible interconversion of serine and glycine with tetrahydrofolate (THF) serving as the one-carbon carrier. This reaction serves as the major source of one-carbon groups required for the biosynthesis of purines, thymidylate, methionine, and other important biomolecules. Also exhibits THF-independent aldolase activity toward beta-hydroxyamino acids, producing glycine and aldehydes, via a retro-aldol mechanism. This Allorhizobium ampelinum (strain ATCC BAA-846 / DSM 112012 / S4) (Agrobacterium vitis (strain S4)) protein is Serine hydroxymethyltransferase.